The sequence spans 969 residues: Defective in germ line development protein 3 (969 aa).

The tract at residues 34 to 81 (MAENAASARKLFVSSALKDIIVNPENFYHDFQQSAQMAEDANQRRQVS) is gld-2-binding. KH domains follow at residues 34–109 (MAEN…MIEI), 113–187 (RVTL…MRRN), 189–259 (HFTV…NEIL), 270–342 (FTLH…IMDL), and 344–419 (PISM…YQKV). The segment at 57–471 (PENFYHDFQQ…GSNGRRHRSS (415 aa)) is gls-1-binding. 2 disordered regions span residues 459–508 (LSDG…SFSE) and 602–711 (EQHR…GDIH). Positions 487-508 (KQFSESSGGPSRSHTRVSSFSE) are enriched in polar residues. Positions 631-644 (PSSSTGSYYPSTTP) are enriched in low complexity. Positions 647–659 (RVYEQVREDDLRS) are enriched in basic and acidic residues. The segment covering 664–676 (RRTSVNGDDQNVE) has biased composition (polar residues). 2 stretches are compositionally biased toward basic and acidic residues: residues 677–687 (SMHDQGYERQY) and 694–711 (LQKD…GDIH). Residues 769-969 (LYMHESPHND…DLSLDETSTY (201 aa)) form a gls-1-binding region. A fbf-1-binding region spans residues 860–949 (NGVTKTILEP…VLNEKEKEIA (90 aa)). The segment at 950–969 (DKSIESTVTQDLSLDETSTY) is disordered. Polar residues predominate over residues 954–969 (ESTVTQDLSLDETSTY).

As to quaternary structure, interacts (via its KH1 domain) with gld-2. Isoform A but not isoform B interacts specifically with fbf-1 and fbf-2 in an RNA-independent manner. Isoform A interacts with gls-1 isoform C. Expressed in the germline (at protein level). In adult hermaphrodites, first detected in the transition zone (TZ), weakly expressed in the early mitotic region and in pachytene germ cells, and becomes more abundantly expressed as germ cells enter diakinesis (at protein level). Expressed in primary spermatocytes, but not in secondary spermatocytes or adult sperm (at protein level).

It is found in the cytoplasm. Its subcellular location is the cytoplasmic granule. The protein localises to the perinuclear region. Functionally, required maternally for germline survival and embryogenesis. Forms a complex with gls-1 which promotes the oogenic cell fate by freeing the translational repressor fbf to repress sperm promoting factors. Promotes maturation of primary spermatocytes to mature sperm. Required during hermaphrodite development to promote sperm fate, which is critical for determining the normal number of sperm. Promotion of sperm fate is at the expense of oogenesis, possibly through the negative regulation of fbf. Required during male development for the continued production of sperm and inhibition of oogenesis. Together with gld-2, promotes the transition from mitosis to meiosis. Required for polyadenylation of neg-1 mRNA during embryogenesis. This is Defective in germ line development protein 3 from Caenorhabditis elegans.